Consider the following 82-residue polypeptide: U-scoloptoxin(21)-Sm3a (82 aa).

A signal peptide spans 1–21 (MKIIALLLMVFLDFIIVNXAE).

Belongs to the scoloptoxin-21 family. As to expression, expressed by the venom gland.

It localises to the secreted. The polypeptide is U-scoloptoxin(21)-Sm3a (Scolopendra morsitans (Tanzanian blue ringleg centipede)).